A 579-amino-acid polypeptide reads, in one-letter code: Folliculin (579 aa).

The interval 32-82 (GAGSGDSPGQVEQAEEEEGGIQMSSRVRAHSPAEGASTDSSSPGPKKSDMC) is disordered. Phosphoserine is present on residues Ser-62 and Ser-73. Residues 86–242 (RSLAVGHPGY…RNGNAARSLT (157 aa)) enclose the uDENN FLCN/SMCR8-type domain. Residues 287 to 310 (EKLADLEEESESWDNSEAEEEEKA) are a coiled coil. A compositionally biased stretch (acidic residues) spans 294 to 308 (EESESWDNSEAEEEE). A disordered region spans residues 294 to 320 (EESESWDNSEAEEEEKAPATAEGAEGR). A phosphoserine mark is found at Ser-302, Ser-406, Ser-537, Ser-542, and Ser-571. The region spanning 339 to 491 (QPPKLSVFKS…ILNKMEAALT (153 aa)) is the cDENN FLCN/SMCR8-type domain. Residues 493–558 (QNLSVDVVDQ…LLKFWMTGLS (66 aa)) form the dDENN FLCN/SMCR8-type domain.

The protein belongs to the folliculin family. Interacts (via C-terminus) with FNIP1 or FNIP2 (via C-terminus). Component of the lysosomal folliculin complex (LFC), composed of FLCN, FNIP1 (or FNIP2), RagA/RRAGA or RagB/RRAGB GDP-bound, RagC/RRAGC or RagD/RRAGD GTP-bound, and Ragulator. Interaction with FNIP1 or FNIP2 mediates indirect interaction with the PRKAA1, PRKAB1 and PRKAG1 subunits of 5'-AMP-activated protein kinase (AMPK). Interacts with HSP90AA1 in the presence of FNIP1. Interacts with HSP70, STUB1, CDC37, AHSA1, CCT2, STIP1, PTGES3 and PPP5C. Interacts with GABARAP; interaction takes place in the presence of FNIP1 and/or FNIP2. Interacts with RILP; the interaction is direct and promotes association between RILP and RAB34. Interacts with KIF3A and KIF3B. Interacts with lactate dehydrogenase LDHA, but not LDHB; the interaction is direct, may preferentially bind LDHA dimers rather than tetramers, and regulates LDHA activity, acting as an uncompetitive inhibitor. In terms of processing, phosphorylation by ULK1 modulates the interaction with GABARAP and is required to regulate autophagy. Expressed in kidney.

The protein localises to the lysosome membrane. It is found in the cytoplasm. The protein resides in the cytosol. It localises to the cell projection. Its subcellular location is the cilium. The protein localises to the cytoskeleton. It is found in the microtubule organizing center. The protein resides in the centrosome. It localises to the spindle. Its subcellular location is the nucleus. With respect to regulation, GTPase-activating activity is inhibited in the folliculin complex (LFC), which stabilizes the GDP-bound state of RagA/RRAGA (or RagB/RRAGB), because Arg-164 is located far from the RagC/RRAGC or RagD/RRAGD nucleotide pocket. Disassembly of the LFC complex upon amino acid restimulation liberates the GTPase-activating activity. In terms of biological role, multi-functional protein, involved in both the cellular response to amino acid availability and in the regulation of glycolysis. GTPase-activating protein that plays a key role in the cellular response to amino acid availability through regulation of the non-canonical mTORC1 signaling cascade controlling the MiT/TFE factors TFEB and TFE3. Activates mTORC1 by acting as a GTPase-activating protein: specifically stimulates GTP hydrolysis by RagC/RRAGC or RagD/RRAGD, promoting the conversion to the GDP-bound state of RagC/RRAGC or RagD/RRAGD, and thereby activating the kinase activity of mTORC1. The GTPase-activating activity is inhibited during starvation and activated in presence of nutrients. Acts as a key component for non-canonical mTORC1-dependent control of the MiT/TFE factors TFEB and TFE3, while it is not involved in mTORC1-dependent phosphorylation of canonical RPS6KB1/S6K1 and EIF4EBP1/4E-BP1. In low-amino acid conditions, the lysosomal folliculin complex (LFC) is formed on the membrane of lysosomes, which inhibits the GTPase-activating activity of FLCN, inactivates mTORC1 and maximizes nuclear translocation of TFEB and TFE3. Upon amino acid restimulation, RagA/RRAGA (or RagB/RRAGB) nucleotide exchange promotes disassembly of the LFC complex and liberates the GTPase-activating activity of FLCN, leading to activation of mTORC1 and subsequent cytoplasmic retention of TFEB and TFE3. Indirectly acts as a positive regulator of Wnt signaling by promoting mTOR-dependent cytoplasmic retention of MiT/TFE factor TFE3. Required for the exit of hematopoietic stem cell from pluripotency by promoting mTOR-dependent cytoplasmic retention of TFE3, thereby increasing Wnt signaling. Involved in the control of embryonic stem cells differentiation; together with LAMTOR1 it is necessary to recruit and activate RagC/RRAGC and RagD/RRAGD at the lysosomes, and to induce exit of embryonic stem cells from pluripotency via non-canonical, mTOR-independent TFE3 inactivation. Acts as an inhibitor of browning of adipose tissue by regulating mTOR-dependent cytoplasmic retention of TFE3. In response to flow stress, regulates STK11/LKB1 accumulation and mTORC1 activation through primary cilia: may act by recruiting STK11/LKB1 to primary cilia for activation of AMPK resided at basal bodies, causing mTORC1 down-regulation. Together with FNIP1 and/or FNIP2, regulates autophagy: following phosphorylation by ULK1, interacts with GABARAP and promotes autophagy. Required for starvation-induced perinuclear clustering of lysosomes by promoting association of RILP with its effector RAB34. Regulates glycolysis by binding to lactate dehydrogenase LDHA, acting as an uncompetitive inhibitor. This Rattus norvegicus (Rat) protein is Folliculin.